A 97-amino-acid polypeptide reads, in one-letter code: Defensin-like protein 246 (97 aa).

An N-terminal signal peptide occupies residues 1–24; that stretch reads MKFVAIFLVTCVLFSLFPSHLSQG. Intrachain disulfides connect Cys-39–Cys-96, Cys-50–Cys-79, Cys-58–Cys-89, and Cys-77–Cys-91.

Belongs to the DEFL family. In terms of tissue distribution, flower buds and stems.

It is found in the secreted. The protein is Defensin-like protein 246 (SCRL5) of Arabidopsis thaliana (Mouse-ear cress).